The chain runs to 293 residues: Bis(5'-nucleosyl)-tetraphosphatase, symmetrical (293 aa).

Belongs to the Ap4A hydrolase family.

The catalysed reaction is P(1),P(4)-bis(5'-adenosyl) tetraphosphate + H2O = 2 ADP + 2 H(+). In terms of biological role, hydrolyzes diadenosine 5',5'''-P1,P4-tetraphosphate to yield ADP. This chain is Bis(5'-nucleosyl)-tetraphosphatase, symmetrical, found in Pseudomonas fluorescens (strain Pf0-1).